The primary structure comprises 130 residues: Small ribosomal subunit protein uS11 (130 aa).

The protein belongs to the universal ribosomal protein uS11 family. Part of the 30S ribosomal subunit. Interacts with proteins S7 and S18. Binds to IF-3.

In terms of biological role, located on the platform of the 30S subunit, it bridges several disparate RNA helices of the 16S rRNA. Forms part of the Shine-Dalgarno cleft in the 70S ribosome. This chain is Small ribosomal subunit protein uS11, found in Prochlorococcus marinus (strain NATL2A).